The primary structure comprises 231 residues: Large ribosomal subunit protein uL1 (231 aa).

This sequence belongs to the universal ribosomal protein uL1 family. As to quaternary structure, part of the 50S ribosomal subunit.

Functionally, binds directly to 23S rRNA. The L1 stalk is quite mobile in the ribosome, and is involved in E site tRNA release. In terms of biological role, protein L1 is also a translational repressor protein, it controls the translation of the L11 operon by binding to its mRNA. This Herminiimonas arsenicoxydans protein is Large ribosomal subunit protein uL1.